Consider the following 146-residue polypeptide: Hemoglobin subunit beta (146 aa).

Position 1 is an N-acetylvaline (V1). Positions 2–146 (HLTADEKAAV…VATALAHKYH (145 aa)) constitute a Globin domain. At T12 the chain carries Phosphothreonine. Phosphoserine is present on S44. K59 carries the N6-acetyllysine modification. H63 serves as a coordination point for heme b. The residue at position 82 (K82) is an N6-acetyllysine. H92 serves as a coordination point for heme b. An S-nitrosocysteine modification is found at C93. K144 is modified (N6-acetyllysine).

It belongs to the globin family. Heterotetramer of two alpha chains and two beta chains. In terms of tissue distribution, red blood cells.

Involved in oxygen transport from the lung to the various peripheral tissues. The chain is Hemoglobin subunit beta (HBB) from Cephalopachus bancanus (Western tarsier).